The sequence spans 334 residues: L-lactate dehydrogenase (334 aa).

The segment at 1–22 is disordered; sequence MASTKGKLIHEMVPSKERDPPH. The span at 8 to 22 shows a compositional bias: basic and acidic residues; the sequence is LIHEMVPSKERDPPH. NAD(+)-binding positions include 31–59 and Arg101; that span reads GQVGMAAAISVLLRDLADELALVDVVEDR. 3 residues coordinate substrate: Arg108, Asn140, and Arg171. Residue Asn140 participates in NAD(+) binding. His195 serves as the catalytic Proton acceptor. Thr250 serves as a coordination point for substrate.

This sequence belongs to the LDH/MDH superfamily. LDH family. Homotetramer.

The protein localises to the cytoplasm. It catalyses the reaction (S)-lactate + NAD(+) = pyruvate + NADH + H(+). It functions in the pathway fermentation; pyruvate fermentation to lactate; (S)-lactate from pyruvate: step 1/1. This Petromyzon marinus (Sea lamprey) protein is L-lactate dehydrogenase.